A 1407-amino-acid chain; its full sequence is DNA-directed RNA polymerase subunit beta' (1407 aa).

Residues Cys70, Cys72, Cys85, and Cys88 each contribute to the Zn(2+) site. The Mg(2+) site is built by Asp460, Asp462, and Asp464. The Zn(2+) site is built by Cys814, Cys888, Cys895, and Cys898. Position 972 is an N6-acetyllysine (Lys972).

It belongs to the RNA polymerase beta' chain family. The RNAP catalytic core consists of 2 alpha, 1 beta, 1 beta' and 1 omega subunit. When a sigma factor is associated with the core the holoenzyme is formed, which can initiate transcription. Mg(2+) serves as cofactor. Zn(2+) is required as a cofactor.

It catalyses the reaction RNA(n) + a ribonucleoside 5'-triphosphate = RNA(n+1) + diphosphate. Functionally, DNA-dependent RNA polymerase catalyzes the transcription of DNA into RNA using the four ribonucleoside triphosphates as substrates. The sequence is that of DNA-directed RNA polymerase subunit beta' from Shigella sonnei (strain Ss046).